The chain runs to 294 residues: Protease HtpX homolog (294 aa).

A run of 2 helical transmembrane segments spans residues 12–32 (VLFG…ASSF) and 34–54 (SPGV…YSYW). A Zn(2+)-binding site is contributed by His138. The active site involves Glu139. Residue His142 participates in Zn(2+) binding. Transmembrane regions (helical) follow at residues 152 to 172 (SVAG…VFFG) and 188 to 208 (LALL…QLAI). Glu213 contributes to the Zn(2+) binding site.

This sequence belongs to the peptidase M48B family. It depends on Zn(2+) as a cofactor.

The protein localises to the cell membrane. The chain is Protease HtpX homolog from Kineococcus radiotolerans (strain ATCC BAA-149 / DSM 14245 / SRS30216).